A 345-amino-acid chain; its full sequence is Probable 3'(2'),5'-bisphosphate nucleotidase 4 (345 aa).

D46 (proton acceptor) is an active-site residue. Mg(2+) is bound by residues E71, D134, V136, and D137. The Proton acceptor role is filled by T139. Residues T139, S247, K250, and R264 each contribute to the adenosine 3',5'-bisphosphate site. S247, K250, and R264 together coordinate AMP.

The protein belongs to the inositol monophosphatase superfamily. The cofactor is Mg(2+).

It catalyses the reaction 3'-phosphoadenylyl sulfate + H2O = adenosine 5'-phosphosulfate + phosphate. The catalysed reaction is adenosine 3',5'-bisphosphate + H2O = AMP + phosphate. It carries out the reaction adenosine 2',5'-bisphosphate + H2O = AMP + phosphate. The enzyme catalyses 1D-myo-inositol 1,4-bisphosphate + H2O = 1D-myo-inositol 4-phosphate + phosphate. It catalyses the reaction 1D-myo-inositol 1,3,4-trisphosphate + H2O = 1D-myo-inositol 3,4-bisphosphate + phosphate. Its pathway is signal transduction; phosphatidylinositol signaling pathway. Phosphatase that converts adenosine 3'-phosphate 5'-phosphosulfate (PAPS) to adenosine 5'-phosphosulfate (APS) and 3'(2')-phosphoadenosine 5'-phosphate (PAP) to AMP. Is also able to hydrolyze inositol 1,4-bisphosphate and inositol 1,3,4-trisphosphate. This chain is Probable 3'(2'),5'-bisphosphate nucleotidase 4 (SAL4), found in Arabidopsis thaliana (Mouse-ear cress).